The chain runs to 250 residues: MFFLINKLVMNFDAPSPWGIYFQDSATPQMEGLNELHDNIMYYLVVILFAVGWILLSIVINYVSTKSPISHKYLNHGTLIELIWTITPAVILILIAFPSFKLLYLMDEVSDPSMSVLAEGHQWYWSYQYPDFLDSNDQFIEFDSYIVPESDLDEGGLRMLEVDNRVVLPELTHVRFIITAGDVIHSFAAPALGIKCDAYPGRLNQVSVFINREGVFYGQCSEICGILHSSMPIVIESVSLEKFLIWLKEQ.

At 1–39 (MFFLINKLVMNFDAPSPWGIYFQDSATPQMEGLNELHDN) the chain is on the mitochondrial intermembrane side. A helical transmembrane segment spans residues 40–60 (IMYYLVVILFAVGWILLSIVI). Over 61–81 (NYVSTKSPISHKYLNHGTLIE) the chain is Mitochondrial matrix. A helical transmembrane segment spans residues 82–104 (LIWTITPAVILILIAFPSFKLLY). The Mitochondrial intermembrane segment spans residues 105–250 (LMDEVSDPSM…EKFLIWLKEQ (146 aa)). Residues His-185, Cys-220, Glu-222, Cys-224, His-228, and Met-231 each contribute to the Cu cation site. Residue Glu-222 participates in Mg(2+) binding.

Belongs to the cytochrome c oxidase subunit 2 family. As to quaternary structure, component of the cytochrome c oxidase (complex IV, CIV), a multisubunit enzyme composed of a catalytic core of 3 subunits and several supernumerary subunits. The complex exists as a monomer or a dimer and forms supercomplexes (SCs) in the inner mitochondrial membrane with ubiquinol-cytochrome c oxidoreductase (cytochrome b-c1 complex, complex III, CIII). Cu cation is required as a cofactor.

It localises to the mitochondrion inner membrane. It carries out the reaction 4 Fe(II)-[cytochrome c] + O2 + 8 H(+)(in) = 4 Fe(III)-[cytochrome c] + 2 H2O + 4 H(+)(out). Its function is as follows. Component of the cytochrome c oxidase, the last enzyme in the mitochondrial electron transport chain which drives oxidative phosphorylation. The respiratory chain contains 3 multisubunit complexes succinate dehydrogenase (complex II, CII), ubiquinol-cytochrome c oxidoreductase (cytochrome b-c1 complex, complex III, CIII) and cytochrome c oxidase (complex IV, CIV), that cooperate to transfer electrons derived from NADH and succinate to molecular oxygen, creating an electrochemical gradient over the inner membrane that drives transmembrane transport and the ATP synthase. Cytochrome c oxidase is the component of the respiratory chain that catalyzes the reduction of oxygen to water. Electrons originating from reduced cytochrome c in the intermembrane space (IMS) are transferred via the dinuclear copper A center (CU(A)) of subunit 2 and heme A of subunit 1 to the active site in subunit 1, a binuclear center (BNC) formed by heme A3 and copper B (CU(B)). The BNC reduces molecular oxygen to 2 water molecules using 4 electrons from cytochrome c in the IMS and 4 protons from the mitochondrial matrix. This chain is Cytochrome c oxidase subunit 2 (COII), found in Podospora anserina (strain S / ATCC MYA-4624 / DSM 980 / FGSC 10383) (Pleurage anserina).